The primary structure comprises 590 residues: Aspartate--tRNA(Asp/Asn) ligase (590 aa).

Glutamate 175 is a binding site for L-aspartate. Residues 199–202 (QQYK) form an aspartate region. L-aspartate-binding residues include arginine 221 and histidine 450. Position 221–223 (221–223 (RDE)) interacts with ATP. Glutamate 484 provides a ligand contact to ATP. L-aspartate is bound at residue arginine 491. 536-539 (GVDR) serves as a coordination point for ATP.

The protein belongs to the class-II aminoacyl-tRNA synthetase family. Type 1 subfamily. Homodimer.

The protein resides in the cytoplasm. It carries out the reaction tRNA(Asx) + L-aspartate + ATP = L-aspartyl-tRNA(Asx) + AMP + diphosphate. Aspartyl-tRNA synthetase with relaxed tRNA specificity since it is able to aspartylate not only its cognate tRNA(Asp) but also tRNA(Asn). Reaction proceeds in two steps: L-aspartate is first activated by ATP to form Asp-AMP and then transferred to the acceptor end of tRNA(Asp/Asn). This chain is Aspartate--tRNA(Asp/Asn) ligase, found in Nitrobacter winogradskyi (strain ATCC 25391 / DSM 10237 / CIP 104748 / NCIMB 11846 / Nb-255).